The sequence spans 424 residues: MSLIKDAQRGLVTEEMKLVAAQEGVTEEFVRKGVAGGHIVIPVSPYRKVKICGIGEGLRTKVNASIGTSSDISDVSVEIEKVRQAELAGADTLMELSTGGDLADIRRQVIAATSLSVGSVPLYQAFIEAAHKKGAVVDMEADDLFRITAEQAKAGTNFMAIHTGINYETMKRLQNQGRHAGLVSRGGAFMTAWMLHNEKENPLYAEFDYLLEIMKEHEVTLSMGNGMRAGAVHDSTDRAAIQELLINAELADKAFNEGVQTIVEGPGHVPIDEIQANVILQKRVTNRKPFYMLGPLVTDIAPGYDDRVAMVGAALSSSYGADFICYVTPAEHLALPTPEEVFEGVISSRIAAHIGDMVKLNKRDDDLEMGHARKALDWDRQYAVAINPKRAKEIRDSRMPADTDGCTMCGDYCAIKIVAKHFNF.

Residues Met-94, Tyr-123, His-162, 184–186 (SRG), 225–228 (NGMR), and Glu-264 contribute to the substrate site. Residue His-268 participates in Zn(2+) binding. A substrate-binding site is contributed by Tyr-291. His-332 lines the Zn(2+) pocket. 3 residues coordinate [4Fe-4S] cluster: Cys-406, Cys-409, and Cys-413.

This sequence belongs to the ThiC family. It depends on [4Fe-4S] cluster as a cofactor.

It catalyses the reaction 5-amino-1-(5-phospho-beta-D-ribosyl)imidazole + S-adenosyl-L-methionine = 4-amino-2-methyl-5-(phosphooxymethyl)pyrimidine + CO + 5'-deoxyadenosine + formate + L-methionine + 3 H(+). The protein operates within cofactor biosynthesis; thiamine diphosphate biosynthesis. In terms of biological role, catalyzes the synthesis of the hydroxymethylpyrimidine phosphate (HMP-P) moiety of thiamine from aminoimidazole ribotide (AIR) in a radical S-adenosyl-L-methionine (SAM)-dependent reaction. This is Phosphomethylpyrimidine synthase from Methanosphaerula palustris (strain ATCC BAA-1556 / DSM 19958 / E1-9c).